We begin with the raw amino-acid sequence, 558 residues long: Chaperonin GroEL 1 (558 aa).

Residues 29-32 (TLGP), 86-90 (DGTTT), Gly-413, and Asp-494 contribute to the ATP site.

It belongs to the chaperonin (HSP60) family. In terms of assembly, forms a cylinder of 14 subunits composed of two heptameric rings stacked back-to-back. Interacts with the co-chaperonin GroES.

The protein resides in the cytoplasm. It catalyses the reaction ATP + H2O + a folded polypeptide = ADP + phosphate + an unfolded polypeptide.. Functionally, together with its co-chaperonin GroES, plays an essential role in assisting protein folding. The GroEL-GroES system forms a nano-cage that allows encapsulation of the non-native substrate proteins and provides a physical environment optimized to promote and accelerate protein folding. In Acaryochloris marina (strain MBIC 11017), this protein is Chaperonin GroEL 1.